The following is a 683-amino-acid chain: E3 ubiquitin-protein ligase RNF103 (683 aa).

4 helical membrane-spanning segments follow: residues 6-26 (FFLLLYFLVLFVLARFFEAIV), 326-346 (LFVLSLVLVNLMAWMDLFITQ), 366-386 (LLIISWLPVLGFLQLPYLDSF), and 411-431 (MFYTSHPALFLSTYLGHGLLI). A compositionally biased stretch (acidic residues) spans 525-542 (EEMSESSQDTENDSDSDN). The disordered stretch occupies residues 525 to 548 (EEMSESSQDTENDSDSDNMDTFSS). The segment at 619 to 661 (CVVCLENFENGCLLMGLPCGHVFHQNCIVMWLAGGRHCCPVCR) adopts an RING-type zinc-finger fold.

Interacts with DERL1 and VCP. As to expression, highly expressed in the normal cerebellum but not in the cerebral cortex.

Its subcellular location is the endoplasmic reticulum membrane. It carries out the reaction S-ubiquitinyl-[E2 ubiquitin-conjugating enzyme]-L-cysteine + [acceptor protein]-L-lysine = [E2 ubiquitin-conjugating enzyme]-L-cysteine + N(6)-ubiquitinyl-[acceptor protein]-L-lysine.. The protein operates within protein modification; protein ubiquitination. In terms of biological role, acts as an E2-dependent E3 ubiquitin-protein ligase, probably involved in the ER-associated protein degradation pathway. The sequence is that of E3 ubiquitin-protein ligase RNF103 (Rnf103) from Mus musculus (Mouse).